A 458-amino-acid chain; its full sequence is MAEIINRNKALAVSPLKASQTMGAALAILGLALSMPLFHGSQGCTAFAKVFFVRHFREPVPLQTTAMDQVSSVMGADENVVEALKTICERQNPSVIGLLTTGLSETQGCDLHTALHEFRTQYEEYKDVPIVPVNTPDFSGCFESGFAAAVKAIVETLVPERRDQVGKRPRQVNVLCSANLTPGDLEYIAESIESFGLRPLLIPDLSGSLDGHLDENRFNALTTGGLSVAELATAGQSVATLVVGQSLAGAADALAERTGVPDRRFGMLYGLDAVDAWLMALAEISGNPVPDRYKRQRAQLQDAMLDTHFMLSSARTAIAADPDLLLGFDALLRSMGAHTVAAVVPARAAALVDSPLPSVRVGDLEDLEHAARAGQAQLVIGNSHALASARRLGVPLLRAGFPQYDLLGGFQRCWSGYRGSSQVLFDLANLLVEHHQGIQPYHSIYAQKPATEQPQWRH.

Residue Cys-44 coordinates [7Fe-Mo-9S-C-homocitryl] cluster.

Belongs to the NifD/NifK/NifE/NifN family.

It functions in the pathway cofactor biosynthesis; Fe-Mo cofactor biosynthesis. In terms of biological role, this protein may play a role in the biosynthesis of the prosthetic group of nitrogenase (FeMo cofactor). In Azotobacter vinelandii, this protein is Nitrogenase iron-molybdenum cofactor biosynthesis protein NifN (nifN).